Reading from the N-terminus, the 217-residue chain is Large ribosomal subunit protein uL3 (217 aa).

The span at 134-146 (GRATHGNSRSHNV) shows a compositional bias: polar residues. Residues 134–154 (GRATHGNSRSHNVPGSIGMAQ) are disordered. Residue glutamine 154 is modified to N5-methylglutamine.

This sequence belongs to the universal ribosomal protein uL3 family. In terms of assembly, part of the 50S ribosomal subunit. Forms a cluster with proteins L14 and L19. Methylated by PrmB.

In terms of biological role, one of the primary rRNA binding proteins, it binds directly near the 3'-end of the 23S rRNA, where it nucleates assembly of the 50S subunit. The protein is Large ribosomal subunit protein uL3 of Burkholderia cenocepacia (strain HI2424).